The chain runs to 146 residues: Hemoglobin subunit beta (146 aa).

The residue at position 1 (Val-1) is an N-acetylvaline. The 145-residue stretch at His-2–His-146 folds into the Globin domain. The residue at position 12 (Thr-12) is a Phosphothreonine. Ser-44 bears the Phosphoserine mark. Lys-59 is modified (N6-acetyllysine). Residue His-63 participates in heme b binding. An N6-acetyllysine modification is found at Lys-82. Position 92 (His-92) interacts with heme b. The residue at position 93 (Cys-93) is an S-nitrosocysteine. Residue Lys-144 is modified to N6-acetyllysine.

Belongs to the globin family. Heterotetramer of two alpha chains and two beta chains. Red blood cells.

Its function is as follows. Involved in oxygen transport from the lung to the various peripheral tissues. The protein is Hemoglobin subunit beta (HBB) of Taphozous georgianus (Sharp-nosed tomb bat).